We begin with the raw amino-acid sequence, 434 residues long: Ribosomal protein uS12 methylthiotransferase RimO (434 aa).

One can recognise an MTTase N-terminal domain in the interval 6 to 122 (NRVFLLSLGC…ILTAIGARYR (117 aa)). [4Fe-4S] cluster-binding residues include Cys15, Cys51, Cys85, Cys146, Cys150, and Cys153. Residues 132–361 (TAPGHTSFLK…MELQEGISEE (230 aa)) form the Radical SAM core domain. A TRAM domain is found at 364–431 (KRLEGREIAV…PYELFGTVLK (68 aa)).

It belongs to the methylthiotransferase family. RimO subfamily. The cofactor is [4Fe-4S] cluster.

Its subcellular location is the cytoplasm. It catalyses the reaction L-aspartate(89)-[ribosomal protein uS12]-hydrogen + (sulfur carrier)-SH + AH2 + 2 S-adenosyl-L-methionine = 3-methylsulfanyl-L-aspartate(89)-[ribosomal protein uS12]-hydrogen + (sulfur carrier)-H + 5'-deoxyadenosine + L-methionine + A + S-adenosyl-L-homocysteine + 2 H(+). Its function is as follows. Catalyzes the methylthiolation of an aspartic acid residue of ribosomal protein uS12. This Chlorobium phaeovibrioides (strain DSM 265 / 1930) (Prosthecochloris vibrioformis (strain DSM 265)) protein is Ribosomal protein uS12 methylthiotransferase RimO.